Consider the following 100-residue polypeptide: UPF0213 protein CKO_04549 (100 aa).

A GIY-YIG domain is found at 2 to 77 (TPWYLYLIRT…KRLTKRQKER (76 aa)).

Belongs to the UPF0213 family.

The chain is UPF0213 protein CKO_04549 from Citrobacter koseri (strain ATCC BAA-895 / CDC 4225-83 / SGSC4696).